A 226-amino-acid polypeptide reads, in one-letter code: Cytidylate kinase (226 aa).

12–20 contributes to the ATP binding site; sequence GPSGAGKGT.

Belongs to the cytidylate kinase family. Type 1 subfamily.

Its subcellular location is the cytoplasm. It carries out the reaction CMP + ATP = CDP + ADP. The catalysed reaction is dCMP + ATP = dCDP + ADP. This is Cytidylate kinase from Xanthomonas campestris pv. campestris (strain 8004).